The chain runs to 176 residues: Disulfide bond formation protein B (176 aa).

Residues 1-14 (MLQFLNRCSKGRGA) lie on the Cytoplasmic side of the membrane. A helical membrane pass occupies residues 15 to 31 (WLLMALTALVLELVALY). The Periplasmic portion of the chain corresponds to 32-49 (FQHVMLLQPCVMCIYERA). Cysteine 41 and cysteine 44 are joined by a disulfide. The helical transmembrane segment at 50 to 65 (ALFGILGASLLGAIAP) threads the bilayer. Topologically, residues 66 to 71 (KSPLRY) are cytoplasmic. Residues 72-89 (LAIFIWIYSAWKGVQLAW) form a helical membrane-spanning segment. At 90-144 (THTMLQLHPSPFTTCDFFVSFPSWLPLDKWFPAVFVASGDCAVKQWEFLSLEMPQ) the chain is on the periplasmic side. Residues cysteine 104 and cysteine 130 are joined by a disulfide bond. The chain crosses the membrane as a helical span at residues 145–163 (WLVGIFAAYLFIAILVLIS). Over 164-176 (QFVKPKRRDLFSR) the chain is Cytoplasmic.

This sequence belongs to the DsbB family.

Its subcellular location is the cell inner membrane. Its function is as follows. Required for disulfide bond formation in some periplasmic proteins. Acts by oxidizing the DsbA protein. The protein is Disulfide bond formation protein B of Yersinia enterocolitica serotype O:8 / biotype 1B (strain NCTC 13174 / 8081).